The following is a 131-amino-acid chain: Cytochrome b5 (131 aa).

The Cytochrome b5 heme-binding domain occupies 3–79; the sequence is AKIFSLDEVS…LEEYLIGSLD (77 aa). The heme site is built by His38 and His62. Residues 108–125 traverse the membrane as a helical segment; that stretch reads IILPALAIIGALVYKYVI.

Belongs to the cytochrome b5 family.

It localises to the endoplasmic reticulum membrane. It is found in the microsome membrane. Its function is as follows. Membrane bound hemoprotein which function as an electron carrier for several membrane bound oxygenases. The chain is Cytochrome b5 from Rhizopus stolonifer (Rhizopus nigricans).